The primary structure comprises 258 residues: Glucose 1-dehydrogenase 2 (258 aa).

Residue 11-35 (IVTGSSKGIGKAIAERFGKEKMNVV) participates in NADP(+) binding. Serine 146 contributes to the substrate binding site. Tyrosine 159 functions as the Proton acceptor in the catalytic mechanism.

It belongs to the short-chain dehydrogenases/reductases (SDR) family. Homotetramer.

The enzyme catalyses D-glucose + NAD(+) = D-glucono-1,5-lactone + NADH + H(+). It catalyses the reaction D-glucose + NADP(+) = D-glucono-1,5-lactone + NADPH + H(+). The chain is Glucose 1-dehydrogenase 2 (ycdF) from Bacillus subtilis (strain 168).